We begin with the raw amino-acid sequence, 484 residues long: Phosphomethylpyrimidine synthase (484 aa).

Residues Asn-97, Met-126, Tyr-156, His-192, 212 to 214 (SRG), 253 to 256 (DSLR), and Glu-292 each bind substrate. His-296 serves as a coordination point for Zn(2+). Tyr-319 serves as a coordination point for substrate. Residue His-360 participates in Zn(2+) binding. Positions 440, 443, and 448 each coordinate [4Fe-4S] cluster.

The protein belongs to the ThiC family. [4Fe-4S] cluster is required as a cofactor.

It catalyses the reaction 5-amino-1-(5-phospho-beta-D-ribosyl)imidazole + S-adenosyl-L-methionine = 4-amino-2-methyl-5-(phosphooxymethyl)pyrimidine + CO + 5'-deoxyadenosine + formate + L-methionine + 3 H(+). Its pathway is cofactor biosynthesis; thiamine diphosphate biosynthesis. Catalyzes the synthesis of the hydroxymethylpyrimidine phosphate (HMP-P) moiety of thiamine from aminoimidazole ribotide (AIR) in a radical S-adenosyl-L-methionine (SAM)-dependent reaction. In Synechococcus sp. (strain CC9605), this protein is Phosphomethylpyrimidine synthase.